Reading from the N-terminus, the 469-residue chain is Protein translocase subunit SecY (469 aa).

Over 1–20 (MSFIDSLATLGQYLPAVTKP) the chain is Cytoplasmic. A helical membrane pass occupies residues 21 to 47 (KEKPSLGQKLVWSLVAVIIYLIMASTP). Residues 48–59 (LYGITSASFFKN) are Extracellular-facing. Residues 60 to 67 (LILEQIIF) constitute an intramembrane region (helical). Residues 60–88 (LILEQIIFASTTGTLAQLGIGPIITAGLI) form a discontinuously helical membrane-spanning segment. An intramembrane segment occupies 68–79 (ASTTGTLAQLGI). The helical intramembrane region spans 80 to 88 (GPIITAGLI). Topologically, residues 89-109 (MQILAGSKLISIDLNDPDDRV) are cytoplasmic. Residues 110–131 (KFTEAQKGLAFIFILVESALFG) traverse the membrane as a helical segment. At 132 to 146 (YVLARTSTTINASIL) the chain is on the extracellular side. The chain crosses the membrane as a helical span at residues 147–171 (FIAGIVIAQLIVATYLILLLDELIQ). Residues 172-178 (KGWGLGS) are Cytoplasmic-facing. The helical transmembrane segment at 179–197 (GVSLFILAGVMKIMFWDMF) threads the bilayer. Residues 198–240 (GIASVSSQNLPIGFFPALFTALASHSDVLNLIVNTSTKNLFQP) lie on the Extracellular side of the membrane. Residues 241 to 262 (DLVGLVTTIALIIITIYLTTMT) traverse the membrane as a helical segment. The Cytoplasmic segment spans residues 263–287 (IEIPVTSQKLRGIRRTIPLNFLYVS). A helical transmembrane segment spans residues 288-309 (SIPVIFVAVLGSDIQLFASLAS). Residues 310 to 347 (YVSPSASNILNTVSGVFFFPPPNSAIPHSIYAVVLDPL) lie on the Extracellular side of the membrane. Residues 348–367 (GALEYAVVFIVLSILFGILW) traverse the membrane as a helical segment. Residues 368–410 (VDVAGLDPATQAQQLVEAGIEIPGVRNNPKIIEGILARYIYPL) lie on the Cytoplasmic side of the membrane. The chain crosses the membrane as a helical span at residues 411 to 429 (AFFSSIIVGLIAVFATLLG). The Extracellular portion of the chain corresponds to 430–432 (AYG). A helical transmembrane segment spans residues 433–447 (TGIGILLAVTIAIQY). Topologically, residues 448–469 (YSLLAYERSLEMYPLLKRLIGE) are cytoplasmic.

Belongs to the SecY/SEC61-alpha family. As to quaternary structure, component of the Sec protein translocase complex. Heterotrimer consisting of alpha (SecY), beta (SecG) and gamma (SecE) subunits. The heterotrimers can form oligomers, although 1 heterotrimer is thought to be able to translocate proteins. Interacts with the ribosome. May interact with SecDF, and other proteins may be involved.

Its subcellular location is the cell membrane. In terms of biological role, the central subunit of the protein translocation channel SecYEG. Consists of two halves formed by TMs 1-5 and 6-10. These two domains form a lateral gate at the front which open onto the bilayer between TMs 2 and 7, and are clamped together by SecE at the back. The channel is closed by both a pore ring composed of hydrophobic SecY resides and a short helix (helix 2A) on the extracellular side of the membrane which forms a plug. The plug probably moves laterally to allow the channel to open. The ring and the pore may move independently. This Saccharolobus solfataricus (strain ATCC 35092 / DSM 1617 / JCM 11322 / P2) (Sulfolobus solfataricus) protein is Protein translocase subunit SecY.